Here is a 364-residue protein sequence, read N- to C-terminus: DNA replication and repair protein RecF (364 aa).

30–37 serves as a coordination point for ATP; it reads GNNAQGKT.

Belongs to the RecF family.

It is found in the cytoplasm. Its function is as follows. The RecF protein is involved in DNA metabolism; it is required for DNA replication and normal SOS inducibility. RecF binds preferentially to single-stranded, linear DNA. It also seems to bind ATP. In Streptococcus uberis (strain ATCC BAA-854 / 0140J), this protein is DNA replication and repair protein RecF.